The chain runs to 297 residues: Phosphatidylserine decarboxylase proenzyme (297 aa).

Active-site charge relay system; for autoendoproteolytic cleavage activity residues include aspartate 92, histidine 149, and serine 254. The active-site Schiff-base intermediate with substrate; via pyruvic acid; for decarboxylase activity is serine 254. At serine 254 the chain carries Pyruvic acid (Ser); by autocatalysis.

The protein belongs to the phosphatidylserine decarboxylase family. PSD-B subfamily. Prokaryotic type I sub-subfamily. As to quaternary structure, heterodimer of a large membrane-associated beta subunit and a small pyruvoyl-containing alpha subunit. The cofactor is pyruvate. Post-translationally, is synthesized initially as an inactive proenzyme. Formation of the active enzyme involves a self-maturation process in which the active site pyruvoyl group is generated from an internal serine residue via an autocatalytic post-translational modification. Two non-identical subunits are generated from the proenzyme in this reaction, and the pyruvate is formed at the N-terminus of the alpha chain, which is derived from the carboxyl end of the proenzyme. The autoendoproteolytic cleavage occurs by a canonical serine protease mechanism, in which the side chain hydroxyl group of the serine supplies its oxygen atom to form the C-terminus of the beta chain, while the remainder of the serine residue undergoes an oxidative deamination to produce ammonia and the pyruvoyl prosthetic group on the alpha chain. During this reaction, the Ser that is part of the protease active site of the proenzyme becomes the pyruvoyl prosthetic group, which constitutes an essential element of the active site of the mature decarboxylase.

It localises to the cell membrane. The catalysed reaction is a 1,2-diacyl-sn-glycero-3-phospho-L-serine + H(+) = a 1,2-diacyl-sn-glycero-3-phosphoethanolamine + CO2. The protein operates within phospholipid metabolism; phosphatidylethanolamine biosynthesis; phosphatidylethanolamine from CDP-diacylglycerol: step 2/2. In terms of biological role, catalyzes the formation of phosphatidylethanolamine (PtdEtn) from phosphatidylserine (PtdSer). The sequence is that of Phosphatidylserine decarboxylase proenzyme from Bordetella parapertussis (strain 12822 / ATCC BAA-587 / NCTC 13253).